The following is a 63-amino-acid chain: Large ribosomal subunit protein uL29 (63 aa).

This sequence belongs to the universal ribosomal protein uL29 family.

The polypeptide is Large ribosomal subunit protein uL29 (Caulobacter vibrioides (strain ATCC 19089 / CIP 103742 / CB 15) (Caulobacter crescentus)).